The sequence spans 78 residues: Ferredoxin (78 aa).

2 consecutive 4Fe-4S ferredoxin-type domains span residues 2 to 29 (FVITSPCIGEKAADCVETCPVDAIHEGP) and 30 to 59 (DQYYIDPDLCIDCAACEPVCPVNAIYQEEF). Residues Cys8 and Cys16 each coordinate [3Fe-4S] cluster. Residues Cys20, Cys39, Cys42, and Cys45 each coordinate [4Fe-4S] cluster. Position 49 (Cys49) interacts with [3Fe-4S] cluster.

[3Fe-4S] cluster serves as cofactor. The cofactor is [4Fe-4S] cluster.

Ferredoxins are iron-sulfur proteins that transfer electrons in a wide variety of metabolic reactions. This chain is Ferredoxin, found in Alicyclobacillus acidocaldarius subsp. acidocaldarius (Bacillus acidocaldarius).